The following is a 48-amino-acid chain: Cuticle protein 5.1 (48 aa).

Its function is as follows. Component of the cuticle of migratory locust which contains more than 100 different structural proteins. The polypeptide is Cuticle protein 5.1 (Locusta migratoria (Migratory locust)).